Here is a 197-residue protein sequence, read N- to C-terminus: Beta-crystallin A2 (197 aa).

Positions 1–11 are N-terminal arm; sequence MSSAPAPGPAP. Beta/gamma crystallin 'Greek key' domains are found at residues 12-52 and 53-99; these read ASLT…KVEN and GVWV…RPVL. The connecting peptide stretch occupies residues 100–105; it reads CANHND. Beta/gamma crystallin 'Greek key' domains lie at 106 to 147 and 148 to 196; these read SRVT…KVSS and GAWV…RRVQ.

It belongs to the beta/gamma-crystallin family. Homo/heterodimer, or complexes of higher-order. The structure of beta-crystallin oligomers seems to be stabilized through interactions between the N-terminal arms.

Its function is as follows. Crystallins are the dominant structural components of the vertebrate eye lens. This chain is Beta-crystallin A2 (CRYBA2), found in Homo sapiens (Human).